Consider the following 355-residue polypeptide: 3-dehydroquinate synthase (355 aa).

NAD(+) contacts are provided by residues 71–76, 105–109, 129–130, Lys-142, Lys-151, and 169–172; these read EGEASK, GVVGD, TS, and TLNT. Positions 184, 246, and 263 each coordinate Zn(2+).

It belongs to the sugar phosphate cyclases superfamily. Dehydroquinate synthase family. NAD(+) is required as a cofactor. It depends on Co(2+) as a cofactor. Zn(2+) serves as cofactor.

It localises to the cytoplasm. The enzyme catalyses 7-phospho-2-dehydro-3-deoxy-D-arabino-heptonate = 3-dehydroquinate + phosphate. It participates in metabolic intermediate biosynthesis; chorismate biosynthesis; chorismate from D-erythrose 4-phosphate and phosphoenolpyruvate: step 2/7. Functionally, catalyzes the conversion of 3-deoxy-D-arabino-heptulosonate 7-phosphate (DAHP) to dehydroquinate (DHQ). The chain is 3-dehydroquinate synthase from Streptococcus mutans serotype c (strain ATCC 700610 / UA159).